The sequence spans 116 residues: Class I hydrophobin 1 (116 aa).

Positions 1–19 are cleaved as a signal peptide; sequence MLFKQAILVATTLTDLAVA. Disulfide bonds link Cys35-Cys95, Cys42-Cys89, Cys43-Cys76, and Cys96-Cys109. Asn44 and Asn100 each carry an N-linked (GlcNAc...) asparagine glycan.

Belongs to the fungal hydrophobin family. In terms of assembly, self-assembles to form functional amyloid fibrils called rodlets. Self-assembly into fibrillar rodlets occurs spontaneously at hydrophobic:hydrophilic interfaces and the rodlets further associate laterally to form amphipathic monolayers.

Its subcellular location is the secreted. The protein localises to the cell wall. Functionally, aerial growth, conidiation, and dispersal of filamentous fungi in the environment rely upon a capability of their secreting small amphipathic proteins called hydrophobins (HPBs) with low sequence identity. Class I can self-assemble into an outermost layer of rodlet bundles on aerial cell surfaces, conferring cellular hydrophobicity that supports fungal growth, development and dispersal; whereas Class II form highly ordered films at water-air interfaces through intermolecular interactions but contribute nothing to the rodlet structure. This is Class I hydrophobin 1 from Pleurotus ostreatus (Oyster mushroom).